The chain runs to 203 residues: Large ribosomal subunit protein uL22 (203 aa).

Residues 138 to 167 (PENTQSGALSQQSQAEQPQNDPENGVDSQL) show a composition bias toward polar residues. The tract at residues 138–203 (PENTQSGALS…TVLAQEKEVK (66 aa)) is disordered. Low complexity predominate over residues 168–177 (SAKTNSTTTA). The span at 183–196 (ADNSTKNDATNTVL) shows a compositional bias: polar residues.

It belongs to the universal ribosomal protein uL22 family. As to quaternary structure, part of the 50S ribosomal subunit.

Its function is as follows. This protein binds specifically to 23S rRNA; its binding is stimulated by other ribosomal proteins, e.g. L4, L17, and L20. It is important during the early stages of 50S assembly. It makes multiple contacts with different domains of the 23S rRNA in the assembled 50S subunit and ribosome. In terms of biological role, the globular domain of the protein is located near the polypeptide exit tunnel on the outside of the subunit, while an extended beta-hairpin is found that lines the wall of the exit tunnel in the center of the 70S ribosome. This Mesomycoplasma hyopneumoniae (strain 7448) (Mycoplasma hyopneumoniae) protein is Large ribosomal subunit protein uL22.